Here is a 1938-residue protein sequence, read N- to C-terminus: Myosin heavy chain, striated muscle (1938 aa).

The Myosin N-terminal SH3-like domain maps to 29 to 79 (DGKKNCWVPDEKEGFASAEIQSSKGDEITVKIVADSSTRTVKKDDIQSMNP). Residues 83-775 (EKLEDMANMT…VLGNLEEMRD (693 aa)) form the Myosin motor domain. 176-183 (GESGAGKT) is an ATP binding site. The actin-binding stretch occupies residues 653–675 (LNKLMKNLYSTHPHFVRCIIPNE). In terms of domain architecture, IQ spans 778–805 (LSKIISMFQAHIRGYLIRKAYKKLQDQR). A rodlike tail (S2 and LMM domains) region spans residues 836–1938 (LLSIARQEEE…RSSVSVSASN (1103 aa)). Residues 836-1938 (LLSIARQEEE…RSSVSVSASN (1103 aa)) adopt a coiled-coil conformation. Basic and acidic residues-rich tracts occupy residues 1041–1058 (VRGD…DLKS) and 1212–1225 (SKLE…KREM). Disordered stretches follow at residues 1041–1062 (VRGD…TQEN), 1187–1332 (SALR…EVRN), 1344–1363 (LEEE…KANN), and 1898–1938 (HELE…SASN). Residues 1265–1285 (RSINELQSQKSRLQAENSDLT) show a composition bias toward polar residues. 3 stretches are compositionally biased toward basic and acidic residues: residues 1286–1303 (RQLE…KEKS), 1310–1332 (EDAR…EVRN), and 1344–1354 (LEEEQESKSDV). The span at 1922-1938 (RSSVSVQRSSVSVSASN) shows a compositional bias: low complexity.

The protein belongs to the TRAFAC class myosin-kinesin ATPase superfamily. Myosin family. In terms of assembly, muscle myosin is a hexameric protein that consists of 2 heavy chain subunits (MHC), 2 alkali light chain subunits (MLC) and 2 regulatory light chain subunits (MLC-2).

Its subcellular location is the cytoplasm. It localises to the myofibril. Functionally, muscle contraction. Myosin is a protein that binds to F-actin and has ATPase activity that is activated by F-actin. The sequence is that of Myosin heavy chain, striated muscle from Argopecten irradians (Bay scallop).